We begin with the raw amino-acid sequence, 320 residues long: MKMINKLIVPVTASALLLGACGASATDSKENTLISSKAGDVTVADTMKKIGKDQIANASFTEMLNKILADKYKNKVNDKKIDEQIEKMQKQYGGKDKFEKALQQQGLTADKYKENLRTAAYHKELLSDKIKISDSEIKEDSKKASHILIKVKSKKSDKEGLDDKEAKQKAEEIQKEVSKDPSKFGEIAKKESMDTGSAKKDGELGYVLKGQTDKDFEKALFKLKDGEVSEVVKSSFGYHIIKADKPTDFNSEKQSLKEKLVDQKVQKNPKLLTDAYKDLLKEYDVDFKDRDIKSVVEDKILNPEKLKQGGAQGGQSGMSQ.

The signal sequence occupies residues 1–20 (MKMINKLIVPVTASALLLGA). Cysteine 21 is lipidated: N-palmitoyl cysteine. The S-diacylglycerol cysteine moiety is linked to residue cysteine 21. One can recognise a PpiC domain in the interval 139 to 245 (EDSKKASHIL…FGYHIIKADK (107 aa)). Residues 159–198 (EGLDDKEAKQKAEEIQKEVSKDPSKFGEIAKKESMDTGSA) are disordered.

Belongs to the PrsA family.

The protein localises to the cell membrane. It carries out the reaction [protein]-peptidylproline (omega=180) = [protein]-peptidylproline (omega=0). Its function is as follows. Plays a major role in protein secretion by helping the post-translocational extracellular folding of several secreted proteins. In Staphylococcus aureus (strain Mu3 / ATCC 700698), this protein is Foldase protein PrsA.